Reading from the N-terminus, the 118-residue chain is Hydrogenase maturation factor HypA (118 aa).

Residue His2 participates in Ni(2+) binding. Cys73, Cys76, Cys89, and Cys92 together coordinate Zn(2+).

Belongs to the HypA/HybF family.

Its function is as follows. Involved in the maturation of [NiFe] hydrogenases. Required for nickel insertion into the metal center of the hydrogenase. The protein is Hydrogenase maturation factor HypA of Shewanella sp. (strain MR-7).